The following is a 1578-amino-acid chain: Bromodomain-containing protein DDB_G0270170 (1578 aa).

Over residues Met1–Glu12 the composition is skewed to acidic residues. Disordered stretches follow at residues Met1–Glu39, Asn108–Glu127, His151–Leu285, and Asn319–Thr454. The span at Ser18–Asn35 shows a compositional bias: low complexity. Basic and acidic residues predominate over residues Tyr152–Asp163. 2 stretches are compositionally biased toward low complexity: residues Asn164–Ile185 and Thr197–Asn231. Composition is skewed to polar residues over residues Asn319–Lys332 and Thr340–Ala351. The span at Gln352–Thr383 shows a compositional bias: low complexity. Residues Glu384–Ile395 show a composition bias toward polar residues. 2 stretches are compositionally biased toward low complexity: residues Lys396–Lys407 and Val417–Thr433. Positions Ser443–Thr454 are enriched in polar residues. A coiled-coil region spans residues Ser479–Lys506. Disordered regions lie at residues Phe543–Asp565 and Ile580–Lys730. Low complexity-rich tracts occupy residues Asn604 to Gln653 and Thr660 to Thr686. The Bromo domain maps to Val735–Val841. Residues Lys851–Asn903 are a coiled coil. Disordered regions lie at residues Lys874–Thr969, His1039–Asn1167, Ser1184–Ala1452, and Glu1480–Met1544. Composition is skewed to low complexity over residues Asn881–Ser911, Ser918–Asn961, and Ser1047–Ser1061. Residues Ser957–His1039 form the NET domain. Positions Arg1064–Gly1077 are enriched in basic and acidic residues. Over residues His1092–Lys1107 the composition is skewed to basic residues. Residues Ser1112 to Asn1167 are compositionally biased toward low complexity. Positions Ser1113–Asn1150 form a coiled coil. A compositionally biased stretch (acidic residues) spans Thr1192–Ser1204. 2 stretches are compositionally biased toward low complexity: residues Glu1205 to Ser1218 and Tyr1231 to Asn1334. Residues Asn1280–Asn1308 are a coiled coil. Residues Ser1356 to Glu1369 show a composition bias toward polar residues. Over residues Ser1370–Thr1386 the composition is skewed to low complexity. Residues Leu1387–Ala1399 are compositionally biased toward polar residues. 2 stretches are compositionally biased toward low complexity: residues Ser1400–Ser1424 and Asn1432–Ser1451. Residues Thr1462 to Met1544 are a coiled coil. Residues Glu1480–Asn1538 are compositionally biased toward basic and acidic residues.

In Dictyostelium discoideum (Social amoeba), this protein is Bromodomain-containing protein DDB_G0270170.